A 181-amino-acid polypeptide reads, in one-letter code: Adenine phosphoribosyltransferase (181 aa).

This sequence belongs to the purine/pyrimidine phosphoribosyltransferase family. As to quaternary structure, homodimer.

The protein resides in the cytoplasm. It carries out the reaction AMP + diphosphate = 5-phospho-alpha-D-ribose 1-diphosphate + adenine. The protein operates within purine metabolism; AMP biosynthesis via salvage pathway; AMP from adenine: step 1/1. Its function is as follows. Catalyzes a salvage reaction resulting in the formation of AMP, that is energically less costly than de novo synthesis. The protein is Adenine phosphoribosyltransferase of Aeromonas salmonicida (strain A449).